Reading from the N-terminus, the 574-residue chain is Phosphatidylinositol 4-kinase gamma 3 (574 aa).

2 consecutive Ubiquitin-like domains span residues 32–109 and 110–188; these read PILV…SDLQ and AISV…AKVR. Positions 257–555 constitute a PI3K/PI4K catalytic domain; the sequence is GNGPIRSSDG…IVPTETTEDE (299 aa). A G-loop region spans residues 263–269; sequence SSDGSGG. Residues 264–270, Lys286, and 381–384 contribute to the ATP site; these read SDGSGGA and QMFV. A catalytic loop region spans residues 414 to 422; the sequence is ANADRHAGN. An activation loop region spans residues 438–464; it reads PIDHGYCFPNKFEDCTFEWLYWPQAKE. Residue Asp440 participates in ATP binding.

Belongs to the PI3/PI4-kinase family. Type II PI4K subfamily.

It catalyses the reaction a 1,2-diacyl-sn-glycero-3-phospho-(1D-myo-inositol) + ATP = a 1,2-diacyl-sn-glycero-3-phospho-(1D-myo-inositol 4-phosphate) + ADP + H(+). Functionally, the phosphorylation of phosphatidylinositol (PI) to PI4P is the first committed step in the generation of phosphatidylinositol 4,5-bisphosphate (PIP2), a precursor of the second messenger inositol 1,4,5-trisphosphate (InsP3). This is Phosphatidylinositol 4-kinase gamma 3 (PI4KG3) from Arabidopsis thaliana (Mouse-ear cress).